The following is a 362-amino-acid chain: Formyltransferase/hydrolase complex Fhc subunit B (362 aa).

Octaheteromer. Part of the formyltransferase/hydrolase complex fhc; composed of FhcA, FhcB, FhcC and FhcD.

It localises to the cytoplasm. It participates in one-carbon metabolism; formaldehyde degradation; formate from formaldehyde (H(4)MPT route): step 4/5. In terms of biological role, involved in the transformation of 5-formyl tetrahydromethanopterin (5-formyl-H(4)MPT) to methanofuran (MFR) and formate via the formylmethanofuran (formyl-MFR). This is Formyltransferase/hydrolase complex Fhc subunit B (fhcB) from Methylorubrum extorquens (strain ATCC 14718 / DSM 1338 / JCM 2805 / NCIMB 9133 / AM1) (Methylobacterium extorquens).